The chain runs to 359 residues: Histidinol-phosphate aminotransferase (359 aa).

Position 217 is an N6-(pyridoxal phosphate)lysine (Lys217).

The protein belongs to the class-II pyridoxal-phosphate-dependent aminotransferase family. Histidinol-phosphate aminotransferase subfamily. Homodimer. The cofactor is pyridoxal 5'-phosphate.

The catalysed reaction is L-histidinol phosphate + 2-oxoglutarate = 3-(imidazol-4-yl)-2-oxopropyl phosphate + L-glutamate. Its pathway is amino-acid biosynthesis; L-histidine biosynthesis; L-histidine from 5-phospho-alpha-D-ribose 1-diphosphate: step 7/9. The sequence is that of Histidinol-phosphate aminotransferase (hisC) from Salmonella typhimurium (strain LT2 / SGSC1412 / ATCC 700720).